Here is a 235-residue protein sequence, read N- to C-terminus: 7-cyano-7-deazaguanine synthase (235 aa).

10-20 lines the ATP pocket; it reads FSGGQDSTTCL. Residues cysteine 198, cysteine 213, cysteine 216, and cysteine 219 each coordinate Zn(2+).

Belongs to the QueC family. The cofactor is Zn(2+).

It carries out the reaction 7-carboxy-7-deazaguanine + NH4(+) + ATP = 7-cyano-7-deazaguanine + ADP + phosphate + H2O + H(+). It participates in purine metabolism; 7-cyano-7-deazaguanine biosynthesis. Its function is as follows. Catalyzes the ATP-dependent conversion of 7-carboxy-7-deazaguanine (CDG) to 7-cyano-7-deazaguanine (preQ(0)). The protein is 7-cyano-7-deazaguanine synthase of Paracidovorax citrulli (strain AAC00-1) (Acidovorax citrulli).